Reading from the N-terminus, the 255-residue chain is Acetylglutamate kinase (255 aa).

Substrate is bound by residues 40 to 41 (GG), Arg-62, and Asn-153.

This sequence belongs to the acetylglutamate kinase family. ArgB subfamily.

The protein localises to the cytoplasm. It carries out the reaction N-acetyl-L-glutamate + ATP = N-acetyl-L-glutamyl 5-phosphate + ADP. It participates in amino-acid biosynthesis; L-arginine biosynthesis; N(2)-acetyl-L-ornithine from L-glutamate: step 2/4. Functionally, catalyzes the ATP-dependent phosphorylation of N-acetyl-L-glutamate. The chain is Acetylglutamate kinase from Bacillus cereus (strain ATCC 14579 / DSM 31 / CCUG 7414 / JCM 2152 / NBRC 15305 / NCIMB 9373 / NCTC 2599 / NRRL B-3711).